We begin with the raw amino-acid sequence, 275 residues long: Echotoxin-2 (275 aa).

Positions 1–23 are cleaved as a signal peptide; that stretch reads MKRNILALVVVVALISQSRPAES. Positions 23–32 are plays an important role in the hemolytic activity; that stretch reads SAGGTIIATL. The N-terminal region stretch occupies residues 49–67; the sequence is ETGASVASAAAAATSSDYS. 5 residues coordinate phosphocholine: Gly123, Ser141, Pro143, Tyr176, and Tyr177. A trp-rich region, which is important for the binding to lipid membrane region spans residues 141–156; it reads SAPYNFDFYSNWLAVG. Residues 249 to 275 constitute a propeptide that is removed on maturation; that stretch reads RAIQQELARRAEEEKQRKRKALDEMLK.

The protein belongs to the actinoporin family. Sea anemone subfamily. As to quaternary structure, octamer or nonamer in membranes. Monomer in the soluble state. Salivary gland.

Its subcellular location is the secreted. It localises to the nematocyst. It is found in the target cell membrane. Its function is as follows. Pore-forming protein that forms cations-selective hydrophilic pores of around 1 nm and causes cardiac stimulation and cytolysis. Pore formation is a multi-step process that involves specific recognition of membrane sphingomyelin (but neither cholesterol nor phosphatidylcholine) using aromatic rich region and adjacent phosphocholine (POC) binding site, firm binding to the membrane (mainly driven by hydrophobic interactions) accompanied by the transfer of the N-terminal region to the lipid-water interface and finally pore formation after oligomerization of monomers. Exhibits both hemolytic and lethal activities. Gangliosides potently inhibits the hemolytic activity. The sequence is that of Echotoxin-2 from Monoplex parthenopeus (Giant triton).